Consider the following 385-residue polypeptide: Beta-lactamase (385 aa).

An N-terminal signal peptide occupies residues 1–20 (MKRLLAFCLLFFAALGQAKV). Serine 84 functions as the Acyl-ester intermediate in the catalytic mechanism. Residue tyrosine 170 is the Proton acceptor of the active site. Residue 335–337 (KTG) coordinates substrate.

This sequence belongs to the class-C beta-lactamase family.

The protein resides in the periplasm. It catalyses the reaction a beta-lactam + H2O = a substituted beta-amino acid. Its function is as follows. This protein is a serine beta-lactamase with a substrate specificity for cephalosporins. The polypeptide is Beta-lactamase (Lysobacter lactamgenus).